The sequence spans 206 residues: Dual specificity phosphatase 29 (206 aa).

The Tyrosine-protein phosphatase domain occupies 47–194 (HVNQVWPSVY…LRALDITLQE (148 aa)). 138-145 (HCVMGRSR) lines the substrate pocket. Cysteine 139 acts as the Phosphocysteine intermediate in catalysis.

The protein belongs to the protein-tyrosine phosphatase family. Non-receptor class dual specificity subfamily.

The protein localises to the cytoplasm. It localises to the nucleus. It carries out the reaction O-phospho-L-tyrosyl-[protein] + H2O = L-tyrosyl-[protein] + phosphate. It catalyses the reaction O-phospho-L-seryl-[protein] + H2O = L-seryl-[protein] + phosphate. The catalysed reaction is O-phospho-L-threonyl-[protein] + H2O = L-threonyl-[protein] + phosphate. Functionally, dual specificity phosphatase able to dephosphorylate phosphotyrosine, phosphoserine and phosphothreonine residues within the same substrate, with a preference for phosphotyrosine as a substrate. Involved in the modulation of AMPK and MAPK1/2 signaling pathways. This is Dual specificity phosphatase 29 (dusp29) from Gasterosteus aculeatus (Three-spined stickleback).